The sequence spans 360 residues: UDP-arabinopyranose mutase 2 (360 aa).

V2 carries the post-translational modification N-acetylvaline. The DXD motif motif lies at 110 to 112 (DDD). A glycan (N-linked (Glc...) arginine) is linked at R158.

The protein belongs to the RGP family. In terms of assembly, heteromers with RGP1, RGP4 and RGP5. It depends on Mn(2+) as a cofactor. Mg(2+) is required as a cofactor. Post-translationally, reversibly glycosylated in vitro by UDP-glucose, UDP-xylose and UDP-galactose, but not UDP-mannose. As to expression, predominantly expressed in shoot and root apical meristems. Expressed in epidermal cells of leaves, inflorescence stems and seed coat. Expressed in pollen.

It localises to the cytoplasm. Its subcellular location is the cytosol. The protein resides in the golgi apparatus. It carries out the reaction UDP-beta-L-arabinofuranose = UDP-beta-L-arabinopyranose. In terms of biological role, UDP-L-arabinose mutase involved in the biosynthesis of cell wall non-cellulosic polysaccharides. Catalyzes the interconvertion of UDP-L-arabinopyranose (UDP-Arap) and UDP-L-arabinofuranose (UDP-Araf) in vitro. Preferentially catalyzes the formation of UDP-Arap from UDP-Araf. At thermodynamic equilibrium in vitro the ratio of the pyranose form over the furanose form is 95:5. Is not active on other UDP-sugars (UDP-Gal, UDP-Xyl, UDP-Glc, GDP-Man and GDP-Fuc). Functions redundantly with RGP2 and is essential for proper cell walls and pollen development. Probably involved in the formation of the pectocellulosic cell wall layer intine. Is probably active as heteromer in vivo. The protein is UDP-arabinopyranose mutase 2 of Arabidopsis thaliana (Mouse-ear cress).